The sequence spans 663 residues: Probable peptidyl-glycine alpha-amidating monooxygenase pamn-1 (663 aa).

The first 21 residues, 1 to 21, serve as a signal peptide directing secretion; that stretch reads MNDRISINLIYLVLTFCCVSA. Residues 1 to 300 form a peptidylglycine alpha-hydroxylating monooxygenase region; it reads MNDRISINLI…YDAKLDNPYP (300 aa). Cu(2+) is bound by residues H75 and H76. The cysteines at positions 82 and 98 are disulfide-linked. H142 serves as a coordination point for Cu(2+). N191 carries N-linked (GlcNAc...) asparagine glycosylation. 2 disulfide bridges follow: C194–C305 and C261–C283. Residues H210 and H212 each contribute to the Cu(2+) site. Residue N269 is glycosylated (N-linked (GlcNAc...) asparagine). A Cu(2+)-binding site is contributed by M282. The interval 301–663 is peptidyl-alpha-hydroxyglycine alpha-amidating lyase; sequence QGAICAKDYP…WQFKIRHDQN (363 aa). Position 376 (R376) interacts with a protein. N411 carries N-linked (GlcNAc...) asparagine glycosylation. 4 NHL repeats span residues 411–454, 464–507, 511–554, and 626–656; these read NQTK…WKIE, SGEL…LDLN, IRQF…MTTQ, and FGQP…LWQF. C478 and C497 are oxidised to a cystine. Positions 496 and 543 each coordinate a protein.

The protein in the C-terminal section; belongs to the peptidyl-alpha-hydroxyglycine alpha-amidating lyase family. This sequence in the N-terminal section; belongs to the copper type II ascorbate-dependent monooxygenase family. Monomer. The cofactor is Zn(2+). Cu(2+) is required as a cofactor.

It is found in the secreted. The catalysed reaction is a [peptide]-C-terminal glycine + 2 L-ascorbate + O2 = a [peptide]-C-terminal (2S)-2-hydroxyglycine + 2 monodehydro-L-ascorbate radical + H2O. It carries out the reaction a [peptide]-C-terminal (2S)-2-hydroxyglycine = a [peptide]-C-terminal amide + glyoxylate. Its function is as follows. Probable bifunctional enzyme that catalyzes 2 sequential steps in C-terminal alpha-amidation of peptides. The monooxygenase part produces an unstable peptidyl(2-hydroxyglycine) intermediate that is dismutated to glyoxylate and the corresponding desglycine peptide amide by the lyase part. C-terminal amidation of peptides such as neuropeptides is essential for full biological activity. This chain is Probable peptidyl-glycine alpha-amidating monooxygenase pamn-1, found in Caenorhabditis elegans.